The chain runs to 198 residues: ATP-dependent Clp protease proteolytic subunit (198 aa).

Residue Ser-98 is the Nucleophile of the active site. The active site involves His-123.

It belongs to the peptidase S14 family. In terms of assembly, fourteen ClpP subunits assemble into 2 heptameric rings which stack back to back to give a disk-like structure with a central cavity, resembling the structure of eukaryotic proteasomes.

It is found in the cytoplasm. The catalysed reaction is Hydrolysis of proteins to small peptides in the presence of ATP and magnesium. alpha-casein is the usual test substrate. In the absence of ATP, only oligopeptides shorter than five residues are hydrolyzed (such as succinyl-Leu-Tyr-|-NHMec, and Leu-Tyr-Leu-|-Tyr-Trp, in which cleavage of the -Tyr-|-Leu- and -Tyr-|-Trp bonds also occurs).. Its function is as follows. Cleaves peptides in various proteins in a process that requires ATP hydrolysis. Has a chymotrypsin-like activity. Plays a major role in the degradation of misfolded proteins. The chain is ATP-dependent Clp protease proteolytic subunit from Listeria innocua serovar 6a (strain ATCC BAA-680 / CLIP 11262).